We begin with the raw amino-acid sequence, 412 residues long: Lipoyl synthase, mitochondrial (412 aa).

The N-terminal 28 residues, 1–28, are a transit peptide targeting the mitochondrion; the sequence is MASIAPSLKRAHAPLRKALTASSTIRAF. [4Fe-4S] cluster is bound by residues Cys124, Cys129, Cys135, Cys155, Cys159, Cys162, and Ser372. The Radical SAM core domain maps to 138–361; sequence GSDKNAATAT…NKRALDMGFL (224 aa).

This sequence belongs to the radical SAM superfamily. Lipoyl synthase family. The cofactor is [4Fe-4S] cluster.

It is found in the mitochondrion. It catalyses the reaction [[Fe-S] cluster scaffold protein carrying a second [4Fe-4S](2+) cluster] + N(6)-octanoyl-L-lysyl-[protein] + 2 oxidized [2Fe-2S]-[ferredoxin] + 2 S-adenosyl-L-methionine + 4 H(+) = [[Fe-S] cluster scaffold protein] + N(6)-[(R)-dihydrolipoyl]-L-lysyl-[protein] + 4 Fe(3+) + 2 hydrogen sulfide + 2 5'-deoxyadenosine + 2 L-methionine + 2 reduced [2Fe-2S]-[ferredoxin]. It participates in protein modification; protein lipoylation via endogenous pathway; protein N(6)-(lipoyl)lysine from octanoyl-[acyl-carrier-protein]: step 2/2. In terms of biological role, catalyzes the radical-mediated insertion of two sulfur atoms into the C-6 and C-8 positions of the octanoyl moiety bound to the lipoyl domains of lipoate-dependent enzymes, thereby converting the octanoylated domains into lipoylated derivatives. This is Lipoyl synthase, mitochondrial from Fusarium vanettenii (strain ATCC MYA-4622 / CBS 123669 / FGSC 9596 / NRRL 45880 / 77-13-4) (Fusarium solani subsp. pisi).